The sequence spans 230 residues: Exosome complex component Rrp4 (230 aa).

One can recognise an S1 motif domain in the interval 60 to 129 (NDKVIGKVID…EIKESWLSLK (70 aa)). In terms of domain architecture, KH spans 137–195 (EEGSIIYIKAPKVPRVIGKAGNMINMIKSETNTKIIVGQNGLIWIDGEPENVDLAINAI).

The protein belongs to the RRP4 family. In terms of assembly, component of the archaeal exosome complex. Forms a trimer of Rrp4 and/or Csl4 subunits. The trimer associates with a hexameric ring-like arrangement composed of 3 Rrp41-Rrp42 heterodimers.

Its subcellular location is the cytoplasm. Functionally, non-catalytic component of the exosome, which is a complex involved in RNA degradation. Increases the RNA binding and the efficiency of RNA degradation. Confers strong poly(A) specificity to the exosome. In Picrophilus torridus (strain ATCC 700027 / DSM 9790 / JCM 10055 / NBRC 100828 / KAW 2/3), this protein is Exosome complex component Rrp4.